A 332-amino-acid polypeptide reads, in one-letter code: Ferredoxin--NADP reductase (332 aa).

8 residues coordinate FAD: T20, E39, Q47, Y52, V92, F126, D288, and S329.

The protein belongs to the ferredoxin--NADP reductase type 2 family. In terms of assembly, homodimer. FAD serves as cofactor.

It carries out the reaction 2 reduced [2Fe-2S]-[ferredoxin] + NADP(+) + H(+) = 2 oxidized [2Fe-2S]-[ferredoxin] + NADPH. This Geobacillus thermodenitrificans (strain NG80-2) protein is Ferredoxin--NADP reductase.